A 386-amino-acid polypeptide reads, in one-letter code: Glucose-1-phosphate adenylyltransferase (386 aa).

Residues Y100, G165, 180-181, and S191 each bind alpha-D-glucose 1-phosphate; that span reads EK.

It belongs to the bacterial/plant glucose-1-phosphate adenylyltransferase family. In terms of assembly, homotetramer.

It catalyses the reaction alpha-D-glucose 1-phosphate + ATP + H(+) = ADP-alpha-D-glucose + diphosphate. The protein operates within glycan biosynthesis; glycogen biosynthesis. Involved in the biosynthesis of ADP-glucose, a building block required for the elongation reactions to produce glycogen. Catalyzes the reaction between ATP and alpha-D-glucose 1-phosphate (G1P) to produce pyrophosphate and ADP-Glc. In Clostridium botulinum (strain Alaska E43 / Type E3), this protein is Glucose-1-phosphate adenylyltransferase.